Consider the following 429-residue polypeptide: MKKVLAIILGGGAGTRLYPLTKLRAKPAVPVAGKYRLIDIPVSNCINSEIFKIYVLTQFNSASLNRHIARTYNFSGFSEGFVEVLAAQQTPENPNWFQGTADAVRQYLWMLQEWDVDEFLILSGDHLYRMDYRLFIQRHRETNADITLSVIPIDDRRASDFGLMKIDNSGRVIDFSEKPKGEALTKMRVDTTVLGLTPEQAASQPYIASMGIYVFKKDVLIKLLKEALERTDFGKEIIPDAAKDHNVQAYLFDDYWEDIGTIEAFYNANLALTQQPMPPFSFYDEEAPIYTRARYLPPTKLLDCHVTESIIGEGCILKNCRIQHSVLGVRSRIETGCMIEESLLMGADFYQASVERQCSIDKGDIPVGIGPDTIIRRAIIDKNARIGHDVKIINKDNVQEADRESQGFYIRSGIVVVLKNAVITDGTII.

Residues G162, 177–178 (EK), and S209 each bind alpha-D-glucose 1-phosphate.

The protein belongs to the bacterial/plant glucose-1-phosphate adenylyltransferase family. Homotetramer.

It catalyses the reaction alpha-D-glucose 1-phosphate + ATP + H(+) = ADP-alpha-D-glucose + diphosphate. Its pathway is glycan biosynthesis; glycogen biosynthesis. Activated by 3-phosphoglycerate and inhibited by phosphate. Involved in the biosynthesis of ADP-glucose, a building block required for the elongation reactions to produce glycogen. Catalyzes the reaction between ATP and alpha-D-glucose 1-phosphate (G1P) to produce pyrophosphate and ADP-Glc. This Nostoc sp. (strain PCC 7120 / SAG 25.82 / UTEX 2576) protein is Glucose-1-phosphate adenylyltransferase.